Here is a 179-residue protein sequence, read N- to C-terminus: MAKLHDYYKDEVVQKLMSQFGYHSVMQVPRVEKITLNMGVGEAIADKKLLDNAAADLAAISGQKPLITKARKSVAGFKIRQGYPIGCKVTLRGERMWEFFERLISIAVPRIRDFRGLSAKSFDGRGNYSMGVREQIIFPEIDYDKVDRVRGLDITITTTAKSDDEGRALLAAFNFPFRK.

This sequence belongs to the universal ribosomal protein uL5 family. In terms of assembly, part of the 50S ribosomal subunit; part of the 5S rRNA/L5/L18/L25 subcomplex. Contacts the 5S rRNA and the P site tRNA. Forms a bridge to the 30S subunit in the 70S ribosome.

This is one of the proteins that bind and probably mediate the attachment of the 5S RNA into the large ribosomal subunit, where it forms part of the central protuberance. In the 70S ribosome it contacts protein S13 of the 30S subunit (bridge B1b), connecting the 2 subunits; this bridge is implicated in subunit movement. Contacts the P site tRNA; the 5S rRNA and some of its associated proteins might help stabilize positioning of ribosome-bound tRNAs. In Proteus mirabilis (strain HI4320), this protein is Large ribosomal subunit protein uL5.